The chain runs to 483 residues: UDP-N-acetylmuramoyl-L-alanyl-D-glutamate--2,6-diaminopimelate ligase 2 (483 aa).

Residue Ser30 coordinates UDP-N-acetyl-alpha-D-muramoyl-L-alanyl-D-glutamate. Residue Gly111–Thr117 participates in ATP binding. UDP-N-acetyl-alpha-D-muramoyl-L-alanyl-D-glutamate is bound by residues Thr156–Thr157, Thr183, and Arg191. Lys223 carries the N6-carboxylysine modification. Residues Arg380, Asp404–Arg407, Gly456, and Glu460 each bind meso-2,6-diaminopimelate. Positions Asp404–Arg407 match the Meso-diaminopimelate recognition motif motif.

This sequence belongs to the MurCDEF family. MurE subfamily. Mg(2+) serves as cofactor. In terms of processing, carboxylation is probably crucial for Mg(2+) binding and, consequently, for the gamma-phosphate positioning of ATP.

It is found in the cytoplasm. It carries out the reaction UDP-N-acetyl-alpha-D-muramoyl-L-alanyl-D-glutamate + meso-2,6-diaminopimelate + ATP = UDP-N-acetyl-alpha-D-muramoyl-L-alanyl-gamma-D-glutamyl-meso-2,6-diaminopimelate + ADP + phosphate + H(+). The protein operates within cell wall biogenesis; peptidoglycan biosynthesis. Functionally, catalyzes the addition of meso-diaminopimelic acid to the nucleotide precursor UDP-N-acetylmuramoyl-L-alanyl-D-glutamate (UMAG) in the biosynthesis of bacterial cell-wall peptidoglycan. This chain is UDP-N-acetylmuramoyl-L-alanyl-D-glutamate--2,6-diaminopimelate ligase 2, found in Clostridium acetobutylicum (strain ATCC 824 / DSM 792 / JCM 1419 / IAM 19013 / LMG 5710 / NBRC 13948 / NRRL B-527 / VKM B-1787 / 2291 / W).